Here is a 121-residue protein sequence, read N- to C-terminus: Small ribosomal subunit protein bS16 (121 aa).

Residues 88 to 121 (GKAKLEKEKKAKAKTKEEENEGSKTESGSNEAES) form a disordered region. Positions 90 to 111 (AKLEKEKKAKAKTKEEENEGSK) are enriched in basic and acidic residues. Over residues 112-121 (TESGSNEAES) the composition is skewed to polar residues.

This sequence belongs to the bacterial ribosomal protein bS16 family.

This chain is Small ribosomal subunit protein bS16, found in Prochlorococcus marinus (strain MIT 9215).